The chain runs to 122 residues: Large ribosomal subunit protein uL14 (122 aa).

The protein belongs to the universal ribosomal protein uL14 family. In terms of assembly, part of the 50S ribosomal subunit. Forms a cluster with proteins L3 and L19. In the 70S ribosome, L14 and L19 interact and together make contacts with the 16S rRNA in bridges B5 and B8.

Functionally, binds to 23S rRNA. Forms part of two intersubunit bridges in the 70S ribosome. This is Large ribosomal subunit protein uL14 from Geobacillus sp. (strain WCH70).